Reading from the N-terminus, the 365-residue chain is IgG receptor FcRn large subunit p51 (365 aa).

A signal peptide spans 1 to 23 (MGVPRPQPWALGLLLFLLPGSLG). The alpha-1 stretch occupies residues 24-110 (AESHLSLLYH…AFKALGGKGP (87 aa)). The Extracellular portion of the chain corresponds to 24–297 (AESHLSLLYH…VELESPAKSS (274 aa)). The tract at residues 111–200 (YTLQGLLGCE…ERGRGNLEWK (90 aa)) is alpha-2. 2 disulfide bridges follow: Cys119–Cys182 and Cys221–Cys275. Asn125 carries N-linked (GlcNAc...) asparagine glycosylation. Residues 201–290 (EPPSMRLKAR…GLAQPLRVEL (90 aa)) are alpha-3. Positions 202–289 (PPSMRLKARP…AGLAQPLRVE (88 aa)) constitute an Ig-like C1-type domain. Residues 291–297 (ESPAKSS) form a connecting peptide region. Residues 298–321 (VLVVGIVIGVLLLTAAAVGGALLW) traverse the membrane as a helical segment. The Cytoplasmic segment spans residues 322–365 (RRMRSGLPAPWISLRGDDTGVLLPTPGEAQDADLKDVNVIPATA). Ser334 carries the post-translational modification Phosphoserine.

It belongs to the immunoglobulin superfamily. In terms of assembly, fcRn complex consists of two subunits: p51, and p14 which is equivalent to beta-2-microglobulin. It forms an MHC class I-like heterodimer. Interacts with albumin/ALB; this interaction regulates ALB homeostasis. As to quaternary structure, (Microbial infection) Interacts with Echovirus 6, Echovirus 11 and Echovirus 30 capsid protein VP1. Expressed in full-term placenta, heart, lung, liver, muscle, kidney, pancreas, and both fetal and adult small intestine.

The protein localises to the cell membrane. The protein resides in the endosome membrane. Its function is as follows. Cell surface receptor that transfers passive humoral immunity from the mother to the newborn. Binds to the Fc region of monomeric immunoglobulin gamma and mediates its selective uptake from milk. IgG in the milk is bound at the apical surface of the intestinal epithelium. The resultant FcRn-IgG complexes are transcytosed across the intestinal epithelium and IgG is released from FcRn into blood or tissue fluids. Throughout life, contributes to effective humoral immunity by recycling IgG and extending its half-life in the circulation. Mechanistically, monomeric IgG binding to FcRn in acidic endosomes of endothelial and hematopoietic cells recycles IgG to the cell surface where it is released into the circulation. In addition of IgG, regulates homeostasis of the other most abundant circulating protein albumin/ALB. In terms of biological role, (Microbial infection) Acts as an uncoating receptor for a panel of echoviruses including Echovirus 5, 6, 7, 9, 11, 13, 25 and 29. The protein is IgG receptor FcRn large subunit p51 (FCGRT) of Homo sapiens (Human).